We begin with the raw amino-acid sequence, 346 residues long: Phosphoribosylformylglycinamidine cyclo-ligase (346 aa).

The protein belongs to the AIR synthase family.

It localises to the cytoplasm. The catalysed reaction is 2-formamido-N(1)-(5-O-phospho-beta-D-ribosyl)acetamidine + ATP = 5-amino-1-(5-phospho-beta-D-ribosyl)imidazole + ADP + phosphate + H(+). It participates in purine metabolism; IMP biosynthesis via de novo pathway; 5-amino-1-(5-phospho-D-ribosyl)imidazole from N(2)-formyl-N(1)-(5-phospho-D-ribosyl)glycinamide: step 2/2. This Bacillus thuringiensis subsp. konkukian (strain 97-27) protein is Phosphoribosylformylglycinamidine cyclo-ligase.